Reading from the N-terminus, the 270-residue chain is Diaminopimelate epimerase (270 aa).

The substrate site is built by asparagine 15, glutamine 49, and asparagine 66. The active-site Proton donor is the cysteine 75. Substrate is bound by residues 76–77 (GN), asparagine 155, asparagine 187, and 204–205 (ER). The active-site Proton acceptor is cysteine 213. 214 to 215 (GS) is a substrate binding site.

It belongs to the diaminopimelate epimerase family. Homodimer.

The protein localises to the cytoplasm. It carries out the reaction (2S,6S)-2,6-diaminopimelate = meso-2,6-diaminopimelate. It participates in amino-acid biosynthesis; L-lysine biosynthesis via DAP pathway; DL-2,6-diaminopimelate from LL-2,6-diaminopimelate: step 1/1. Functionally, catalyzes the stereoinversion of LL-2,6-diaminopimelate (L,L-DAP) to meso-diaminopimelate (meso-DAP), a precursor of L-lysine and an essential component of the bacterial peptidoglycan. The sequence is that of Diaminopimelate epimerase from Rickettsia massiliae (strain Mtu5).